The primary structure comprises 99 residues: Integration host factor subunit alpha (99 aa).

It belongs to the bacterial histone-like protein family. As to quaternary structure, heterodimer of an alpha and a beta chain.

In terms of biological role, this protein is one of the two subunits of integration host factor, a specific DNA-binding protein that functions in genetic recombination as well as in transcriptional and translational control. The sequence is that of Integration host factor subunit alpha from Stenotrophomonas maltophilia (strain R551-3).